Consider the following 160-residue polypeptide: MLPFLFFSTLFSSIFTEAQKQYWVCNSSDASISYTYCDKMQYPISINVNPCIELKRSKGLLHIFYIPRRDLKQLYFNLYITVNTMNLPKRKEVICRGSDDDYSFCRALKGETVNTTISFSFKGIKFSKGKYKCVVEAISGSPEEMLFCLEFVILHQPNSN.

The N-terminal stretch at 1-18 (MLPFLFFSTLFSSIFTEA) is a signal peptide. 3 disulfide bridges follow: Cys25/Cys51, Cys37/Cys148, and Cys95/Cys105. Residue Asn26 is glycosylated (N-linked (GlcNAc...) asparagine). The N-linked (GlcNAc...) asparagine glycan is linked to Asn114. The segment at 119–123 (FSFKG) is interaction with lipopolysaccharide.

In terms of assembly, heterogeneous homomer formed from homodimers; disulfide-linked. Belongs to the lipopolysaccharide (LPS) receptor, a multi-protein complex containing at least CD14, LY96 and TLR4. Binds to the extracellular domains of TLR2 and TLR4. Ligand binding induces interaction with TLR4 and oligomerization of the complex. N-glycosylated; high-mannose.

It is found in the secreted. The protein localises to the extracellular space. Functionally, binds bacterial lipopolysaccharide (LPS). Cooperates with TLR4 in the innate immune response to bacterial lipopolysaccharide (LPS), and with TLR2 in the response to cell wall components from Gram-positive and Gram-negative bacteria. Enhances TLR4-dependent activation of NF-kappa-B. Cells expressing both LY96 and TLR4, but not TLR4 alone, respond to LPS. The sequence is that of Lymphocyte antigen 96 (LY96) from Homo sapiens (Human).